The sequence spans 387 residues: Exodeoxyribonuclease 7 large subunit (387 aa).

Belongs to the XseA family. Heterooligomer composed of large and small subunits.

The protein localises to the cytoplasm. It carries out the reaction Exonucleolytic cleavage in either 5'- to 3'- or 3'- to 5'-direction to yield nucleoside 5'-phosphates.. Its function is as follows. Bidirectionally degrades single-stranded DNA into large acid-insoluble oligonucleotides, which are then degraded further into small acid-soluble oligonucleotides. The chain is Exodeoxyribonuclease 7 large subunit from Campylobacter jejuni subsp. jejuni serotype O:6 (strain 81116 / NCTC 11828).